The following is an 886-amino-acid chain: Methanogenesis regulatory histidine kinase FilI (886 aa).

2 helical membrane-spanning segments follow: residues 7–27 (ILAF…TFMC) and 270–290 (VVGI…FLEL). The HAMP domain maps to 290–344 (LSILMPLATITSSVEAIREQEKGQGSRIPTVGPAELATLAESINEMLDHLESYNQ). Residues 349–419 (SEKRFRTIVD…EKDAGVLSGE (71 aa)) form the PAS domain. In terms of domain architecture, PAC spans 421 to 473 (FVGEVSAHTRAGSSMTFHAVKVPLRDDRGQVTGICGIARDITDIKEAGVELLK). Residues 674–886 (TVSHDLRSPL…TCVLFTLPTP (213 aa)) enclose the Histidine kinase domain. H677 bears the Phosphohistidine; by autocatalysis mark.

In terms of processing, autophosphorylated.

The protein resides in the cell membrane. It catalyses the reaction ATP + protein L-histidine = ADP + protein N-phospho-L-histidine.. Member of the two-component regulatory system FilI/FilRs, which is involved in the regulation of methanogenesis. Autophosphorylates and specifically transfers the phosphoryl group to both FilR1 and FilR2. Functionally, could also catalyze the synthesis of the quorum sensing (QS) signal molecules carboxyl-acyl homoserine lactones (AHLs), which regulate the transition of the cellular morphology from short cells to filaments and of the carbon metabolic flux from biomass formation to methane production. This chain is Methanogenesis regulatory histidine kinase FilI, found in Methanothrix harundinacea (strain 6Ac) (Methanosaeta harundinacea).